Reading from the N-terminus, the 161-residue chain is Ragulator complex protein LAMTOR1 (161 aa).

The segment at 1–43 (MGCCYSSENEDSDQDREERKLLLDPSSPPTKALNGAEPNYHSL) is disordered. Gly-2 is lipidated: N-myristoyl glycine. 2 S-palmitoyl cysteine lipidation sites follow: Cys-3 and Cys-4. Residue Lys-20 forms a Glycyl lysine isopeptide (Lys-Gly) (interchain with G-Cter in ubiquitin) linkage. Position 27 is a phosphoserine (Ser-27). A Glycyl lysine isopeptide (Lys-Gly) (interchain with G-Cter in ubiquitin) cross-link involves residue Lys-31. 2 positions are modified to phosphoserine: Ser-42 and Ser-56. Residue Lys-60 forms a Glycyl lysine isopeptide (Lys-Gly) (interchain with G-Cter in ubiquitin) linkage. Phosphoserine is present on Ser-98. Glycyl lysine isopeptide (Lys-Gly) (interchain with G-Cter in ubiquitin) cross-links involve residues Lys-103 and Lys-104. Residues 121 to 161 (SEPIPFSDLQQVSRIAAYAYSALSQIRVDAKEELVVQFGIP) are interaction with LAMTOR2 and LAMTOR3. Ser-141 is modified (phosphoserine).

It belongs to the LAMTOR1 family. In terms of assembly, part of the Ragulator complex composed of LAMTOR1, LAMTOR2, LAMTOR3, LAMTOR4 and LAMTOR5. LAMTOR4 and LAMTOR5 form a heterodimer that interacts, through LAMTOR1, with a LAMTOR2, LAMTOR3 heterodimer. Interacts with LAMTOR2 and LAMTOR3; the interaction is direct. The Ragulator complex interacts with both the mTORC1 complex and heterodimers constituted of the Rag GTPases RagA/RRAGA, RagB/RRAGB, RagC/RRAGC and RagD/RRAGD; regulated by amino acid availability. The Ragulator complex interacts with SLC38A9; the probable amino acid sensor. Component of the lysosomal folliculin complex (LFC), composed of FLCN, FNIP1 (or FNIP2), RagA/RRAGA or RagB/RRAGB GDP-bound, RagC/RRAGC or RagD/RRAGD GTP-bound, and Ragulator. Associates with the lysosomal V-ATPase complex; interaction promotes the guanine nucleotide exchange factor (GEF) of the Ragulator complex. Interacts with MMP14. Interacts with CDKN1B; prevents the interaction of CDKN1B with RHOA leaving RHOA in a form accessible to activation by ARHGEF2. Interacts with PIP4P1. In terms of processing, N-terminal myristoylation and palmitoylation mediates its recruitment to lysosome membranes, thereby promoting localization of the Ragulator complex to lysosomes. N-myristoylation by NMT1 is required for palmitoylation at Cys-3 and Cys-4. May be palmitoylated by ZDHHC3. Post-translationally, ubiquitinated at Lys-60, Lys-103 and Lys-104 by UBE3A, promoting its degradation by the proteasome. Ubiquitination at Lys-20 impairs the association with the lysosomal V-ATPase complex. Deubiquitination at Lys-20 by USP32 promotes the association with the lysosomal V-ATPase complex and subsequent activation of the mTORC1 complex.

The protein resides in the lysosome membrane. It localises to the late endosome membrane. Key component of the Ragulator complex, a multiprotein complex involved in amino acid sensing and activation of mTORC1, a signaling complex promoting cell growth in response to growth factors, energy levels, and amino acids. Activated by amino acids through a mechanism involving the lysosomal V-ATPase, the Ragulator plays a dual role for the small GTPases Rag (RagA/RRAGA, RagB/RRAGB, RagC/RRAGC and/or RagD/RRAGD): it (1) acts as a guanine nucleotide exchange factor (GEF), activating the small GTPases Rag and (2) mediates recruitment of Rag GTPases to the lysosome membrane. Activated Ragulator and Rag GTPases function as a scaffold recruiting mTORC1 to lysosomes where it is in turn activated. LAMTOR1 is directly responsible for anchoring the Ragulator complex to the lysosomal membrane. LAMTOR1 wraps around the other subunits of the Ragulator complex to hold them in place and interacts with the Rag GTPases, thereby playing a key role in the recruitment of the mTORC1 complex to lysosomes. Also involved in the control of embryonic stem cells differentiation via non-canonical RagC/RRAGC and RagD/RRAGD activation: together with FLCN, it is necessary to recruit and activate RagC/RRAGC and RagD/RRAGD at the lysosomes, and to induce exit of embryonic stem cells from pluripotency via non-canonical, mTOR-independent TFE3 inactivation. Also required for late endosomes/lysosomes biogenesis it may regulate both the recycling of receptors through endosomes and the MAPK signaling pathway through recruitment of some of its components to late endosomes. May be involved in cholesterol homeostasis regulating LDL uptake and cholesterol release from late endosomes/lysosomes. May also play a role in RHOA activation. This Homo sapiens (Human) protein is Ragulator complex protein LAMTOR1.